We begin with the raw amino-acid sequence, 95 residues long: Small ribosomal subunit protein mS37 (95 aa).

Residues 27–69 form the CHCH domain; that stretch reads ANKCLVLMSNLLQCWSSYGHMSPKCAGLVTELKSCTSESALGK. Short sequence motifs (cx9C motif) lie at residues 30 to 40 and 51 to 61; these read CLVLMSNLLQC and CAGLVTELKSC. 2 disulfide bridges follow: C30–C61 and C40–C51.

The protein belongs to the mitochondrion-specific ribosomal protein mS37 family. In terms of assembly, component of the mitochondrial small ribosomal subunit (mt-SSU). Mature yeast 74S mitochondrial ribosomes consist of a small (37S) and a large (54S) subunit. The 37S small subunit contains a 15S ribosomal RNA (15S mt-rRNA) and 34 different proteins. The 54S large subunit contains a 21S rRNA (21S mt-rRNA) and 46 different proteins.

It is found in the mitochondrion. The protein localises to the mitochondrion matrix. In terms of biological role, component of the mitochondrial ribosome (mitoribosome), a dedicated translation machinery responsible for the synthesis of mitochondrial genome-encoded proteins, including at least some of the essential transmembrane subunits of the mitochondrial respiratory chain. The mitoribosomes are attached to the mitochondrial inner membrane and translation products are cotranslationally integrated into the membrane. This is Small ribosomal subunit protein mS37 (MRP10) from Saccharomyces cerevisiae (strain ATCC 204508 / S288c) (Baker's yeast).